The chain runs to 219 residues: Peroxiredoxin (219 aa).

The 163-residue stretch at 2 to 164 (PLIGDDAPSF…IKRIVVALQK (163 aa)) folds into the Thioredoxin domain. C44 functions as the Cysteine sulfenic acid (-SOH) intermediate in the catalytic mechanism. R127 lines the substrate pocket. The cysteines at positions 206 and 212 are disulfide-linked.

The protein belongs to the peroxiredoxin family. Prx6 subfamily. Homodecamer. Pentamer of dimers that assemble into a ring structure.

It localises to the cytoplasm. It catalyses the reaction a hydroperoxide + [thioredoxin]-dithiol = an alcohol + [thioredoxin]-disulfide + H2O. Its function is as follows. Thiol-specific peroxidase that catalyzes the reduction of hydrogen peroxide and organic hydroperoxides to water and alcohols, respectively. Plays a role in cell protection against oxidative stress by detoxifying peroxides. This chain is Peroxiredoxin, found in Methanosarcina mazei (strain ATCC BAA-159 / DSM 3647 / Goe1 / Go1 / JCM 11833 / OCM 88) (Methanosarcina frisia).